We begin with the raw amino-acid sequence, 289 residues long: D-alanine aminotransferase (289 aa).

A substrate-binding site is contributed by tyrosine 31. Arginine 50 is a binding site for pyridoxal 5'-phosphate. Residues arginine 99 and histidine 101 each coordinate substrate. Lysine 147 functions as the Proton acceptor in the catalytic mechanism. At lysine 147 the chain carries N6-(pyridoxal phosphate)lysine. Glutamate 179 contributes to the pyridoxal 5'-phosphate binding site.

It belongs to the class-IV pyridoxal-phosphate-dependent aminotransferase family. Homodimer. It depends on pyridoxal 5'-phosphate as a cofactor.

It carries out the reaction D-alanine + 2-oxoglutarate = D-glutamate + pyruvate. Functionally, acts on the D-isomers of alanine, leucine, aspartate, glutamate, aminobutyrate, norvaline and asparagine. The enzyme transfers an amino group from a substrate D-amino acid to the pyridoxal phosphate cofactor to form pyridoxamine and an alpha-keto acid in the first half-reaction. The second half-reaction is the reverse of the first, transferring the amino group from the pyridoxamine to a second alpha-keto acid to form the product D-amino acid via a ping-pong mechanism. This is an important process in the formation of D-alanine and D-glutamate, which are essential bacterial cell wall components. In Listeria monocytogenes serotype 4b (strain F2365), this protein is D-alanine aminotransferase (dat).